Consider the following 156-residue polypeptide: Small ribosomal subunit protein uS7 (156 aa).

It belongs to the universal ribosomal protein uS7 family. As to quaternary structure, part of the 30S ribosomal subunit. Contacts proteins S9 and S11.

Functionally, one of the primary rRNA binding proteins, it binds directly to 16S rRNA where it nucleates assembly of the head domain of the 30S subunit. Is located at the subunit interface close to the decoding center, probably blocks exit of the E-site tRNA. In Bradyrhizobium sp. (strain BTAi1 / ATCC BAA-1182), this protein is Small ribosomal subunit protein uS7.